The chain runs to 188 residues: Thymidine kinase (188 aa).

17–24 (GPMFAGKT) serves as a coordination point for ATP. The active-site Proton acceptor is the E92. Position 121 (F121) interacts with substrate. Residues C146 and C149 each contribute to the Zn(2+) site. Residue 166 to 170 (LILAG) participates in substrate binding. C179 and C182 together coordinate Zn(2+).

It belongs to the thymidine kinase family.

It carries out the reaction thymidine + ATP = dTMP + ADP + H(+). Its function is as follows. Phosphorylates thymidine. ASFV replicates in the cytoplasm of infected cells and contains genes encoding a number of enzymes needed for DNA synthesis, including thymidine kinase. Important for growth in swine macrophages in vitro and is a virus virulence factor in swine. This is Thymidine kinase from African swine fever virus (isolate Tick/South Africa/Pretoriuskop Pr4/1996) (ASFV).